The following is a 680-amino-acid chain: Cytosolic endo-beta-N-acetylglucosaminidase 1 (680 aa).

Over residues 1 to 15 (MSVAPPAPSPPPFDP) the composition is skewed to pro residues. Residues 1 to 21 (MSVAPPAPSPPPFDPTKPSTP) form a disordered region.

Belongs to the glycosyl hydrolase 85 family.

It localises to the cytoplasm. Its subcellular location is the cytosol. It carries out the reaction an N(4)-(oligosaccharide-(1-&gt;3)-[oligosaccharide-(1-&gt;6)]-beta-D-Man-(1-&gt;4)-beta-D-GlcNAc-(1-&gt;4)-alpha-D-GlcNAc)-L-asparaginyl-[protein] + H2O = an oligosaccharide-(1-&gt;3)-[oligosaccharide-(1-&gt;6)]-beta-D-Man-(1-&gt;4)-D-GlcNAc + N(4)-(N-acetyl-beta-D-glucosaminyl)-L-asparaginyl-[protein]. In terms of biological role, endoglycosidase that releases N-glycans from glycoproteins by cleaving the beta-1,4-glycosidic bond in the N,N'-diacetylchitobiose core. Involved in the production of high-mannose type N-glycans during plant development and fruit maturation. The polypeptide is Cytosolic endo-beta-N-acetylglucosaminidase 1 (Arabidopsis thaliana (Mouse-ear cress)).